Here is a 278-residue protein sequence, read N- to C-terminus: MTVLHSVDFFPSGNASVAIEPRLPQADFPEHHHDFHEIVIVEHGTGIHVFNGQPYTITGGTVCFVRDHDRHLYEHTDNLCLTNVLYRSPDRFQFLAGLNQLLPQEQDGQYPSHWRVNHSVLQQVRQLVAQMEQQEEENDLPSTASREILFMQLLLLLRKSSLQENLENSASRLNLLLAWLEDHFADEVNWDAVADQFSLSLRTLHRQLKQQTGLTPQRYLNRLRLMKARHLLRHSEASVTDIAYRCGFSDSNHFSTLFRREFNWSPRDIRQGRDGFLQ.

The HTH araC/xylS-type domain occupies 174–272 (NLLLAWLEDH…NWSPRDIRQG (99 aa)). 2 DNA-binding regions (H-T-H motif) span residues 191 to 212 (DAVADQFSLSLRTLHRQLKQQT) and 239 to 262 (VTDIAYRCGFSDSNHFSTLFRREF).

Binds DNA as a dimer.

It is found in the cytoplasm. Functionally, activates expression of the rhaBAD and rhaT operons. The chain is HTH-type transcriptional activator RhaS from Escherichia coli (strain SMS-3-5 / SECEC).